The primary structure comprises 372 residues: D-alanine--D-alanine ligase (372 aa).

One can recognise an ATP-grasp domain in the interval 145–349 (KTVLRAGGIP…CPNLLDQLIE (205 aa)). An ATP-binding site is contributed by 176–231 (DRWGTSELFVKAVSLGSSVATLPVKTETEFTKAVKEVFRYDDRLMVEPRIRGREIE). Positions 303, 316, and 318 each coordinate Mg(2+).

This sequence belongs to the D-alanine--D-alanine ligase family. It depends on Mg(2+) as a cofactor. Mn(2+) is required as a cofactor.

It localises to the cytoplasm. The catalysed reaction is 2 D-alanine + ATP = D-alanyl-D-alanine + ADP + phosphate + H(+). It functions in the pathway cell wall biogenesis; peptidoglycan biosynthesis. Its function is as follows. Cell wall formation. This Coxiella burnetii (strain Dugway 5J108-111) protein is D-alanine--D-alanine ligase.